We begin with the raw amino-acid sequence, 379 residues long: MEQLSSANTLFALELFQTLNESSPTGNIFFSPFSISSALAMVILGAKGSTAAQLSKTFHFDSVEDIHSRFQSLNAEVSKRGASHTLKLANRLYGEKTYNFLPEYLASTQKMYGADLAPVDFLHASEDARKEINQWVKGQTEGKIPELLSVGVVDSMTKLVLVNAIYFKGMWEEKFMTEDTTDAPFRLSKKDTKTVKMMYQKKKFPFGYISDLKCKVLEMPYQGGELSMVILLPKDIEDESTGLKKIEKQITLEKLLEWTKRENLEFIDVHVKLPRFKIEESYTLNSNLGRLGVQDLFSSSKADLSGMSGSRDLFISKIVHKSFVEVNEEGTEAAAATGGIATFCMLLPEEEFTVDHPFIFFIRHNPTSNVLFLGRVCSP.

S300 carries the post-translational modification Phosphoserine. Positions 351 to 379 (EFTVDHPFIFFIRHNPTSNVLFLGRVCSP) are CARD-binding motif (CBM).

It belongs to the serpin family. Ov-serpin subfamily. Monomer. Interacts (via C-terminus) with CASP1 and CASP4 (via CARD domain); these interactions regulate the activity of inflammatory caspases. As to expression, ubiquitous with higher expression in pancreas, spleen and bone marrow.

The protein resides in the secreted. It localises to the cytoplasm. Its subcellular location is the cytolytic granule. The protein localises to the early endosome. In terms of biological role, neutrophil serine protease inhibitor that plays an essential role in the regulation of the innate immune response, inflammation and cellular homeostasis. Acts primarily to protect the cell from proteases released in the cytoplasm during stress or infection. These proteases are important in killing microbes but when released from granules, these potent enzymes also destroy host proteins and contribute to mortality. Regulates the activity of the neutrophil proteases elastase, cathepsin G, proteinase-3, chymase, chymotrypsin, and kallikrein-3. Also acts as a potent intracellular inhibitor of granzyme H. During inflammation, limits the activity of inflammatory caspases CASP1 and CASP4 by suppressing their caspase-recruitment domain (CARD) oligomerization and enzymatic activation. In addition, promotes the proliferation of beta-cells when secreted. This chain is Leukocyte elastase inhibitor A (Serpinb1a), found in Mus musculus (Mouse).